Here is a 248-residue protein sequence, read N- to C-terminus: MAGHSKWANIQHRKGKQDKLRSKMFSKLAKEITVAAKMGDPDPDKNPRLRLAVKAAKAVSMPKDVIERAIKKSQGGDAEDYSEIRYEGYGPNGIAIIVETMTDNVNRTASNVRSYFTKYGGNLGTTGSVSFMFDRVGEITYKPAAGDADTVMMAAIEAGADDVESDEEGHWIYCGDTSLNEVSEALEKVLGESEEAKLVWKPQNRTNVDLETAQKLMKLIDALEEDDDVQTVTGNFDIPEDVAAKLDA.

The interval M1–R21 is disordered.

This sequence belongs to the TACO1 family.

It is found in the cytoplasm. In Cereibacter sphaeroides (strain ATCC 17023 / DSM 158 / JCM 6121 / CCUG 31486 / LMG 2827 / NBRC 12203 / NCIMB 8253 / ATH 2.4.1.) (Rhodobacter sphaeroides), this protein is Probable transcriptional regulatory protein RHOS4_22610.